The primary structure comprises 527 residues: Peptide chain release factor 3 (527 aa).

In terms of domain architecture, tr-type G spans 11–278; that stretch reads AKRRTFAIIS…GFVEWAPAPL (268 aa). Residues 20–27, 87–91, and 141–144 each bind GTP; these read SHPDAGKT, DTPGH, and NKMD.

The protein belongs to the TRAFAC class translation factor GTPase superfamily. Classic translation factor GTPase family. PrfC subfamily.

The protein localises to the cytoplasm. Its function is as follows. Increases the formation of ribosomal termination complexes and stimulates activities of RF-1 and RF-2. It binds guanine nucleotides and has strong preference for UGA stop codons. It may interact directly with the ribosome. The stimulation of RF-1 and RF-2 is significantly reduced by GTP and GDP, but not by GMP. The chain is Peptide chain release factor 3 from Teredinibacter turnerae (strain ATCC 39867 / T7901).